The following is a 130-amino-acid chain: Small ribosomal subunit protein uS9 (130 aa).

This sequence belongs to the universal ribosomal protein uS9 family.

This Buchnera aphidicola subsp. Baizongia pistaciae (strain Bp) protein is Small ribosomal subunit protein uS9.